A 238-amino-acid chain; its full sequence is Gas vesicle protein F (238 aa).

It belongs to the gas vesicle GvpF/GvpL family. As to quaternary structure, binds GvpA.

It is found in the gas vesicle. Functionally, a minor component of the gas vesicle, may be involved in preventing GvpA aggregation during gas vesicle nucleation. Gas vesicles are hollow, gas filled proteinaceous nanostructures found in some microorganisms. It is not clear what function gas vesicles perform in soil bacteria. This Streptomyces sp. (strain CB03234) protein is Gas vesicle protein F.